A 204-amino-acid polypeptide reads, in one-letter code: Recombination protein RecR (204 aa).

Residues 63–78 (CRRCFNITVGELCAIC) form a C4-type zinc finger. Positions 86-181 (TKICVVEEPL…RVTRPARGLP (96 aa)) constitute a Toprim domain.

The protein belongs to the RecR family.

Its function is as follows. May play a role in DNA repair. It seems to be involved in an RecBC-independent recombinational process of DNA repair. It may act with RecF and RecO. In Chloroflexus aurantiacus (strain ATCC 29366 / DSM 635 / J-10-fl), this protein is Recombination protein RecR.